Reading from the N-terminus, the 430-residue chain is V-type ATP synthase beta chain 1 (430 aa).

It belongs to the ATPase alpha/beta chains family.

In terms of biological role, produces ATP from ADP in the presence of a proton gradient across the membrane. The V-type beta chain is a regulatory subunit. This chain is V-type ATP synthase beta chain 1 (atpB1), found in Treponema pallidum (strain Nichols).